The following is an 866-amino-acid chain: Speckle targeted PIP5K1A-regulated poly(A) polymerase (866 aa).

A Matrin-type zinc finger spans residues 16-46 (FRCCLCDVTTANRPSLDAHLKGRKHRDLVQL). An RRM domain is found at 56–128 (RSVFVSGFPR…HTLRVRPREQ (73 aa)). The segment at 116–147 (LGGHTLRVRPREQKEFQSPASKSPKGVDSNSH) is disordered. Ser205 is an ATP binding site. 2 residues coordinate Mg(2+): Asp216 and Asp218. UTP is bound by residues Asp216 and Asp218. 2 disordered regions span residues 223 to 249 (LGDM…STLA) and 267 to 321 (LSPT…EGKH). Positions 282-304 (TPSSLAPQTPDSALGSDTVTSPQ) are enriched in polar residues. ATP is bound at residue Asn393. Asn393, Arg415, Tyr433, and His550 together coordinate UTP. Positions 492–550 (LSSLLAQFFSCVSCWDLSGSLLSLREGQALMVAGGLPSDLWEGLRLGPMNLQDPFDLSH) constitute a PAP-associated domain. The interval 599-866 (SSPSSLLSAK…IPQALKNLLK (268 aa)) is KA1; binds the bulging loops of U6 snRNA but is dispensable for terminal uridylyltransferase activity. Disordered regions lie at residues 638 to 687 (QGTK…DHSE), 728 to 755 (EQNP…PSSV), and 773 to 792 (RRRF…STGA). Basic and acidic residues predominate over residues 669-687 (KSCEEGKEEPQGCAGDHSE). Ser686 and Ser741 each carry phosphoserine.

The protein belongs to the DNA polymerase type-B-like family. As to quaternary structure, associates with the cleavage and polyadenylation specificity factor (CPSF) complex. Interacts with CPSF1 and CPSF3; the interaction is direct. Interacts with PIP5K1A. Mg(2+) is required as a cofactor. The cofactor is Mn(2+). Post-translationally, phosphorylated by CK1 in the proline-rich (Pro-rich) region.

The protein localises to the nucleus. Its subcellular location is the nucleolus. It localises to the nucleus speckle. It carries out the reaction RNA(n) + UTP = RNA(n)-3'-uridine ribonucleotide + diphosphate. It catalyses the reaction RNA(n) + ATP = RNA(n)-3'-adenine ribonucleotide + diphosphate. Adenylyltransferase activity is specifically phosphatidylinositol 4,5-bisphosphate (PtdIns(4,5)P2). Functionally, poly(A) polymerase that creates the 3'-poly(A) tail of specific pre-mRNAs. Localizes to nuclear speckles together with PIP5K1A and mediates polyadenylation of a select set of mRNAs, such as HMOX1. In addition to polyadenylation, it is also required for the 3'-end cleavage of pre-mRNAs: binds to the 3'UTR of targeted pre-mRNAs and promotes the recruitment and assembly of the CPSF complex on the 3'UTR of pre-mRNAs. In addition to adenylyltransferase activity, also has uridylyltransferase activity. However, the ATP ratio is higher than UTP in cells, suggesting that it functions primarily as a poly(A) polymerase. Acts as a specific terminal uridylyltransferase for U6 snRNA in vitro: responsible for a controlled elongation reaction that results in the restoration of the four 3'-terminal UMP-residues found in newly transcribed U6 snRNA. Not involved in replication-dependent histone mRNA degradation. This chain is Speckle targeted PIP5K1A-regulated poly(A) polymerase (Tut1), found in Rattus norvegicus (Rat).